A 196-amino-acid chain; its full sequence is ATP-dependent Clp protease proteolytic subunit (196 aa).

Catalysis depends on Ser-101, which acts as the Nucleophile. Residue His-126 is part of the active site.

It belongs to the peptidase S14 family. In terms of assembly, component of the chloroplastic Clp protease core complex.

It is found in the plastid. The protein localises to the chloroplast stroma. The enzyme catalyses Hydrolysis of proteins to small peptides in the presence of ATP and magnesium. alpha-casein is the usual test substrate. In the absence of ATP, only oligopeptides shorter than five residues are hydrolyzed (such as succinyl-Leu-Tyr-|-NHMec, and Leu-Tyr-Leu-|-Tyr-Trp, in which cleavage of the -Tyr-|-Leu- and -Tyr-|-Trp bonds also occurs).. Functionally, cleaves peptides in various proteins in a process that requires ATP hydrolysis. Has a chymotrypsin-like activity. Plays a major role in the degradation of misfolded proteins. The chain is ATP-dependent Clp protease proteolytic subunit from Gossypium hirsutum (Upland cotton).